An 84-amino-acid chain; its full sequence is ATP synthase subunit c (84 aa).

The next 2 membrane-spanning stretches (helical) occupy residues 9–29 (IFGS…GFSL) and 54–74 (IVAG…LLFI).

This sequence belongs to the ATPase C chain family. In terms of assembly, F-type ATPases have 2 components, F(1) - the catalytic core - and F(0) - the membrane proton channel. F(1) has five subunits: alpha(3), beta(3), gamma(1), delta(1), epsilon(1). F(0) has three main subunits: a(1), b(2) and c(10-14). The alpha and beta chains form an alternating ring which encloses part of the gamma chain. F(1) is attached to F(0) by a central stalk formed by the gamma and epsilon chains, while a peripheral stalk is formed by the delta and b chains.

The protein resides in the cell inner membrane. In terms of biological role, f(1)F(0) ATP synthase produces ATP from ADP in the presence of a proton or sodium gradient. F-type ATPases consist of two structural domains, F(1) containing the extramembraneous catalytic core and F(0) containing the membrane proton channel, linked together by a central stalk and a peripheral stalk. During catalysis, ATP synthesis in the catalytic domain of F(1) is coupled via a rotary mechanism of the central stalk subunits to proton translocation. Key component of the F(0) channel; it plays a direct role in translocation across the membrane. A homomeric c-ring of between 10-14 subunits forms the central stalk rotor element with the F(1) delta and epsilon subunits. This is ATP synthase subunit c from Histophilus somni (strain 2336) (Haemophilus somnus).